The primary structure comprises 437 residues: GTPase Der (437 aa).

2 consecutive EngA-type G domains span residues 2–167 (ATVL…EKKG) and 180–356 (IRVA…NSLF). GTP-binding positions include 8–15 (GKSNVGKS), 55–59 (DTCGI), 118–121 (NKSE), 186–193 (GRPNAGKS), 233–237 (DTAGL), and 299–302 (NKID). The KH-like domain occupies 357-437 (YRVQTSAVNA…PIFLKFKNRH (81 aa)).

The protein belongs to the TRAFAC class TrmE-Era-EngA-EngB-Septin-like GTPase superfamily. EngA (Der) GTPase family. As to quaternary structure, associates with the 50S ribosomal subunit.

Functionally, GTPase that plays an essential role in the late steps of ribosome biogenesis. The chain is GTPase Der from Thermosipho melanesiensis (strain DSM 12029 / CIP 104789 / BI429).